Here is a 149-residue protein sequence, read N- to C-terminus: Small ribosomal subunit protein uS17c (149 aa).

The transit peptide at 1–49 (MITSSLTSSLQALKLSSPFAHGSTPLSSLSKPNSFPNHRMPALVPVIRA) directs the protein to the chloroplast.

This sequence belongs to the universal ribosomal protein uS17 family. In terms of assembly, part of the 30S ribosomal subunit.

It localises to the plastid. Its subcellular location is the chloroplast. Functionally, one of the primary rRNA binding proteins, it binds specifically to the 5'-end of 16S ribosomal RNA. Required for optimal plastid performance in terms of photosynthesis and growth. Required for the translation of plastid mRNAs. Plays a critical role in biosynthesis of thylakoid membrane proteins encoded by chloroplast genes. The sequence is that of Small ribosomal subunit protein uS17c (RPS17) from Arabidopsis thaliana (Mouse-ear cress).